We begin with the raw amino-acid sequence, 30 residues long: Babycurus-toxin 1 (30 aa).

The 29-residue stretch at 2–30 folds into the LCN-type CS-alpha/beta domain; the sequence is KDGYPTNSKGCKISGCLPGENKFCLNECQ.

The protein belongs to the long (4 C-C) scorpion toxin superfamily. Sodium channel inhibitor family. In terms of tissue distribution, expressed by the venom gland.

Its subcellular location is the secreted. Binds to sodium channels (Nav) and inhibits both the activation and inactivation of the activated channels, thereby blocking neuronal transmission. This chain is Babycurus-toxin 1, found in Babycurus centrurimorphus (East African scorpion).